Consider the following 469-residue polypeptide: MPTISEDLIRRRAEHNNCEIFSLEEISLHQQDLERIEHIDKWCRELKILYLQNNLIGKIENVSKLKKLEYLNLALNNIEKIENLEGCESLQKLDLTVNFVGELSSINSLQENLHLRELYLVGNPCAEYEGYRQYVVATLPQLKWLDGKEIERSERIQALQDYPQVQGRMKEQQEAYLRKRAAEREEARSKLQGKQKESRKTQEKKPGFDRRWYTDINNTIPDPVEKPDPTEQNGDETALRKAEEEEEKEFWSQPSQYTPESRLETHRYLEEKRKSKESSSEGELKKKPPRTLITAEGRVLNVNESKLDFSLVDDEENNQFVLDLAIYRHLDTSLVDVDVQPSYIKVLVKEKPFQLVLPAEVKPDSSSAKRSQTTGHLVVTMPKAIGVIQTKRAKSPVVEEQTRKNPPKCSKTFEKLEVDPKACSVPDFANIVQEKKTQAQGPLQFHKNKVKDTEDSEDFIDNTDVPPLM.

LRR repeat units follow at residues 20 to 43 (IFSL…DKWC), 44 to 65 (RELK…VSKL), 66 to 89 (KKLE…GCES), and 90 to 110 (LQKL…NSLQ). The region spanning 114 to 135 (HLRELYLVGNPCAEYEGYRQYV) is the LRRCT domain. 2 stretches are compositionally biased toward basic and acidic residues: residues 179–213 (KRAA…RRWY) and 261–286 (SRLE…ELKK). Disordered stretches follow at residues 179–290 (KRAA…KPPR) and 436–469 (KTQA…PPLM).

Belongs to the tilB family.

It is found in the cytoplasm. The protein resides in the cell projection. The protein localises to the cilium. Its subcellular location is the dynein axonemal particle. It localises to the flagellum. Involved in dynein arm assembly, is important for expression and transporting outer dynein arm (ODA) proteins from the cytoplasm to the cilia. This chain is Dynein axonemal assembly factor 11 (dnaaf11), found in Xenopus laevis (African clawed frog).